A 367-amino-acid chain; its full sequence is Quinolinate synthase (367 aa).

2 residues coordinate iminosuccinate: H45 and S62. C109 serves as a coordination point for [4Fe-4S] cluster. Residues 140 to 142 (YVN) and S161 contribute to the iminosuccinate site. Position 229 (C229) interacts with [4Fe-4S] cluster. Residues 255–257 (HPE) and T272 each bind iminosuccinate. C319 is a [4Fe-4S] cluster binding site.

It belongs to the quinolinate synthase family. Type 3 subfamily. Requires [4Fe-4S] cluster as cofactor.

It is found in the cytoplasm. It carries out the reaction iminosuccinate + dihydroxyacetone phosphate = quinolinate + phosphate + 2 H2O + H(+). Its pathway is cofactor biosynthesis; NAD(+) biosynthesis; quinolinate from iminoaspartate: step 1/1. Catalyzes the condensation of iminoaspartate with dihydroxyacetone phosphate to form quinolinate. The polypeptide is Quinolinate synthase (Lysinibacillus sphaericus (strain C3-41)).